Consider the following 602-residue polypeptide: Multicopper oxidase aurL2 (602 aa).

The first 17 residues, 1-17 (MLFRFLALLPFVAGAFA), serve as a signal peptide directing secretion. 2 consecutive Plastocyanin-like domains span residues 38-149 (DIKI…VRDA) and 160-317 (IPLL…KYRC). Residues asparagine 52 and asparagine 80 are each glycosylated (N-linked (GlcNAc...) asparagine). Residues histidine 84, histidine 86, histidine 130, and histidine 132 each contribute to the Cu cation site. 7 N-linked (GlcNAc...) asparagine glycosylation sites follow: asparagine 201, asparagine 247, asparagine 337, asparagine 383, asparagine 387, asparagine 419, and asparagine 424. The Plastocyanin-like 3 domain occupies 421 to 556 (TTPNYTLALE…QVMGMATVWV (136 aa)). Histidine 469 provides a ligand contact to Cu cation. Asparagine 482 and asparagine 486 each carry an N-linked (GlcNAc...) asparagine glycan.

It belongs to the multicopper oxidase family.

It functions in the pathway pigment biosynthesis. Multicopper oxidase; part of the gene cluster that mediates the biosynthesis of aurofusarin, a red mycelium pigment which is acting as a mycotoxin. The first step is performed by the polyketide synthase which condenses one acetyl-CoA and 6 malonyl-CoA units to form the first intermediate, the cyclic heptaketide and yellow pigment YWA1. The C2 hydroxyl group in the pyrone ring of YWA1 is probably formed during ring closure by an aldol-type cyclization reaction. The dehydratase aurZ then acts as the first tailoring enzyme in the aurofusarin biosynthetic pathway by converting YWA1 to nor-rubrofusarin. Nor-rubrofusarin is then methylated to rubrofusarin by the O-methyltransferase aurJ. Rubrofusarin is then transported across the plasma membrane by the rubrofusarin-specific pump aurT for further enzymatic processing by the extracellular complex composed of GIP1, aurF, aurO and aurS to yield aurofusarin. This chain is Multicopper oxidase aurL2 (aurL2), found in Gibberella zeae (strain ATCC MYA-4620 / CBS 123657 / FGSC 9075 / NRRL 31084 / PH-1) (Wheat head blight fungus).